A 365-amino-acid chain; its full sequence is Histidinol-phosphate aminotransferase (365 aa).

Positions methionine 1–valine 23 are disordered. Residue lysine 221 is modified to N6-(pyridoxal phosphate)lysine.

The protein belongs to the class-II pyridoxal-phosphate-dependent aminotransferase family. Histidinol-phosphate aminotransferase subfamily. In terms of assembly, homodimer. Pyridoxal 5'-phosphate is required as a cofactor.

The enzyme catalyses L-histidinol phosphate + 2-oxoglutarate = 3-(imidazol-4-yl)-2-oxopropyl phosphate + L-glutamate. It participates in amino-acid biosynthesis; L-histidine biosynthesis; L-histidine from 5-phospho-alpha-D-ribose 1-diphosphate: step 7/9. In Rhodopseudomonas palustris (strain BisB18), this protein is Histidinol-phosphate aminotransferase.